We begin with the raw amino-acid sequence, 610 residues long: GPI transamidase component GPI16 (610 aa).

A signal peptide spans 1–19; the sequence is MILTLAYFMLGTLLLGVFA. Over 20–551 the chain is Lumenal; the sequence is EDTVSQIGIN…STPDFSMPYN (532 aa). Asparagine 184 carries an N-linked (GlcNAc...) asparagine glycan. A helical membrane pass occupies residues 552-572; that stretch reads VIILTSTIMGLIFGMLYNLMV. Topologically, residues 573 to 610 are cytoplasmic; it reads KRMVTVEEADKITLQSGLKYKLLKLKEKFLGKKKTKTD.

It belongs to the PIGT family. As to quaternary structure, forms a complex with CDC91, GPI17, GPI8 and GAA1. Post-translationally, the disulfide bond between GPI8 and GPI16 is important for normal enzyme activity.

It is found in the endoplasmic reticulum membrane. It participates in glycolipid biosynthesis; glycosylphosphatidylinositol-anchor biosynthesis. Its function is as follows. Component of the GPI transamidase complex. Involved in transfer of GPI to proteins. The chain is GPI transamidase component GPI16 (GPI16) from Saccharomyces cerevisiae (strain ATCC 204508 / S288c) (Baker's yeast).